The primary structure comprises 218 residues: uncharacterized protein (218 aa).

A run of 5 helical transmembrane segments spans residues 19 to 39 (VFGF…FTII), 92 to 112 (FDYA…VSAV), 124 to 144 (YGLI…MILA), 161 to 181 (LLFE…IAPF), and 196 to 216 (YILM…EILL).

It is found in the cell membrane. This is an uncharacterized protein from Methanocaldococcus jannaschii (strain ATCC 43067 / DSM 2661 / JAL-1 / JCM 10045 / NBRC 100440) (Methanococcus jannaschii).